Here is a 301-residue protein sequence, read N- to C-terminus: Homeobox protein knotted-1-like 1 (301 aa).

Positions 141–170 are disordered; that stretch reads CSGATSPPATTATHSDEMVGSSDEDQCSGE. The segment covering 144-153 has biased composition (low complexity); it reads ATSPPATTAT. Residues 188–208 enclose the ELK domain; the sequence is ELKEMLLKKYSGCLSRLRSEF. Positions 209–272 form a DNA-binding region, homeobox; TALE-type; it reads LKKRKKGKLP…NQRKRHWKPS (64 aa).

This sequence belongs to the TALE/KNOX homeobox family.

It localises to the nucleus. Its function is as follows. Probable transcription factor that may be involved in shoot formation during early embryogenesis. This chain is Homeobox protein knotted-1-like 1 (OSH6), found in Oryza sativa subsp. japonica (Rice).